Reading from the N-terminus, the 1154-residue chain is Nitric oxide synthase, inducible (1154 aa).

A disordered region spans residues 22–58 (KDINNNVEKPPGATPSPSTQDDLKNHKHHNDSPQPLT). The short motif at 23–27 (DINNN) is the DINNN-motif; mediates interaction with SPSB1, SPSB2 and SPSB4 element. Zn(2+)-binding residues include Cys-107 and Cys-112. Residue Cys-197 coordinates heme b. 4 residues coordinate L-arginine: Gln-260, Trp-369, Tyr-370, and Glu-374. (6R)-L-erythro-5,6,7,8-tetrahydrobiopterin-binding residues include Arg-378, Ile-459, Trp-460, and Phe-473. Residue Tyr-488 participates in heme b binding. The calmodulin-binding stretch occupies residues 512–532 (LKVLVKAVLFASMLMRKTMAS). The Flavodoxin-like domain maps to 536-674 (VTILFATETG…AFRCWAVQTF (139 aa)). Residues Thr-542, Glu-543, Thr-544, Lys-546, and Ser-547 each coordinate FMN. Tyr-572 is subject to Phosphotyrosine. FMN is bound by residues Ser-588, Thr-589, Ser-625, Cys-632, and Glu-658. The FAD-binding FR-type domain maps to 727–967 (KNVFTLRLKS…VRSAGNFKLP (241 aa)). Arg-747 contacts NADP(+). FAD contacts are provided by His-769, Arg-903, Tyr-905, Ser-906, Thr-921, Ala-923, Tyr-927, Val-940, Cys-941, and Ser-942. 8 residues coordinate NADP(+): Thr-981, Arg-1014, Ser-1043, Arg-1044, Lys-1050, Tyr-1052, Gln-1054, and Asp-1087.

This sequence belongs to the NOS family. Homodimer. Interacts with NHERF1. Interacts with GAPDH; induced by oxidatively-modified low-densitity lipoprotein (LDL(ox)). Interacts with S100A8 and S100A9 to form the iNOS-S100A8/9 transnitrosylase complex. Interacts with SPSB1, SPSB2 and SPSB4. Interacts with ELOC and CUL5 in the presence of SPSB1 or SPSB2 or SPSB4. Forms a complex with ASL, ASS1 and HSP90AA1; the complex regulates cell-autonomous L-arginine synthesis and citrulline recycling while channeling extracellular L-arginine to nitric oxide synthesis pathway. Heme b serves as cofactor. It depends on FAD as a cofactor. Requires FMN as cofactor. (6R)-L-erythro-5,6,7,8-tetrahydrobiopterin is required as a cofactor. In terms of processing, polyubiquitinated; mediated by SPSB1, SPSB2 and SPSB4, leading to proteasomal degradation.

The protein localises to the cytoplasm. It localises to the cytosol. The enzyme catalyses 2 L-arginine + 3 NADPH + 4 O2 + H(+) = 2 L-citrulline + 2 nitric oxide + 3 NADP(+) + 4 H2O. Its activity is regulated as follows. Regulated by calcium/calmodulin. In terms of biological role, produces nitric oxide (NO) which is a messenger molecule with diverse functions throughout the body. In macrophages, NO mediates tumoricidal and bactericidal actions. Also has nitrosylase activity and mediates cysteine S-nitrosylation of cytoplasmic target proteins such PTGS2/COX2. As component of the iNOS-S100A8/9 transnitrosylase complex involved in the selective inflammatory stimulus-dependent S-nitrosylation of GAPDH implicated in regulation of the GAIT complex activity and probably multiple targets including ANXA5, EZR, MSN and VIM. Involved in inflammation, enhances the synthesis of pro-inflammatory mediators such as IL6 and IL8. The protein is Nitric oxide synthase, inducible (NOS2) of Canis lupus familiaris (Dog).